Reading from the N-terminus, the 763-residue chain is 5-methyltetrahydropteroyltriglutamate--homocysteine methyltransferase (763 aa).

5-methyltetrahydropteroyltri-L-glutamate contacts are provided by residues 16 to 19 and Lys-117; that span reads RELK. Residues 440–442 and Glu-493 each bind L-homocysteine; that span reads IGS. L-methionine-binding positions include 440–442 and Glu-493; that span reads IGS. Residues 524 to 525 and Trp-570 each bind 5-methyltetrahydropteroyltri-L-glutamate; that span reads RC. An L-homocysteine-binding site is contributed by Asp-608. Position 608 (Asp-608) interacts with L-methionine. Residue Glu-614 participates in 5-methyltetrahydropteroyltri-L-glutamate binding. His-650, Cys-652, and Glu-674 together coordinate Zn(2+). Residue His-703 is the Proton donor of the active site. Position 735 (Cys-735) interacts with Zn(2+).

It belongs to the vitamin-B12 independent methionine synthase family. Zn(2+) is required as a cofactor.

It catalyses the reaction 5-methyltetrahydropteroyltri-L-glutamate + L-homocysteine = tetrahydropteroyltri-L-glutamate + L-methionine. The protein operates within amino-acid biosynthesis; L-methionine biosynthesis via de novo pathway; L-methionine from L-homocysteine (MetE route): step 1/1. In terms of biological role, catalyzes the transfer of a methyl group from 5-methyltetrahydrofolate to homocysteine resulting in methionine formation. This is 5-methyltetrahydropteroyltriglutamate--homocysteine methyltransferase from Alcanivorax borkumensis (strain ATCC 700651 / DSM 11573 / NCIMB 13689 / SK2).